The following is a 217-amino-acid chain: Phosphoenolpyruvate guanylyltransferase (217 aa).

Phosphoenolpyruvate is bound by residues Thr150, Gly165, and Ser168.

It belongs to the CofC family.

The catalysed reaction is phosphoenolpyruvate + GTP + H(+) = enolpyruvoyl-2-diphospho-5'-guanosine + diphosphate. The protein operates within cofactor biosynthesis; coenzyme F420 biosynthesis. Guanylyltransferase that catalyzes the activation of phosphoenolpyruvate (PEP) as enolpyruvoyl-2-diphospho-5'-guanosine, via the condensation of PEP with GTP. It is involved in the biosynthesis of coenzyme F420, a hydride carrier cofactor. The sequence is that of Phosphoenolpyruvate guanylyltransferase from Mycobacterium marinum (strain ATCC BAA-535 / M).